Consider the following 296-residue polypeptide: Phosphatidylglycerol--prolipoprotein diacylglyceryl transferase (296 aa).

The next 4 membrane-spanning stretches (helical) occupy residues 10 to 30 (IAFS…LAAF), 57 to 77 (LLFY…MLFY), 92 to 112 (VWEG…ACWL), and 119 to 139 (LHFF…LGFG). R140 contributes to the a 1,2-diacyl-sn-glycero-3-phospho-(1'-sn-glycerol) binding site. 3 helical membrane-spanning segments follow: residues 194 to 214 (QLYE…TFSM), 220 to 240 (YAVS…VEFV), and 254 to 274 (WLTM…VLLA).

This sequence belongs to the Lgt family.

It localises to the cell inner membrane. It catalyses the reaction L-cysteinyl-[prolipoprotein] + a 1,2-diacyl-sn-glycero-3-phospho-(1'-sn-glycerol) = an S-1,2-diacyl-sn-glyceryl-L-cysteinyl-[prolipoprotein] + sn-glycerol 1-phosphate + H(+). It functions in the pathway protein modification; lipoprotein biosynthesis (diacylglyceryl transfer). Its function is as follows. Catalyzes the transfer of the diacylglyceryl group from phosphatidylglycerol to the sulfhydryl group of the N-terminal cysteine of a prolipoprotein, the first step in the formation of mature lipoproteins. This is Phosphatidylglycerol--prolipoprotein diacylglyceryl transferase from Xanthomonas euvesicatoria pv. vesicatoria (strain 85-10) (Xanthomonas campestris pv. vesicatoria).